We begin with the raw amino-acid sequence, 734 residues long: Elongation factor G, mitochondrial (734 aa).

A mitochondrion-targeting transit peptide spans 1–32 (MTSFLTSRFGGLALRNVMNNKNGINSFGLRCF). The tr-type G domain maps to 38-318 (SGLRNIGISA…GVIKYLPSPN (281 aa)). Residues 47 to 54 (AHIDSGKT), 114 to 118 (DTPGH), and 168 to 171 (NKLD) contribute to the GTP site.

The protein belongs to the TRAFAC class translation factor GTPase superfamily. Classic translation factor GTPase family. EF-G/EF-2 subfamily.

The protein localises to the mitochondrion. It carries out the reaction GTP + H2O = GDP + phosphate + H(+). The protein operates within protein biosynthesis; polypeptide chain elongation. Mitochondrial GTPase that catalyzes the GTP-dependent ribosomal translocation step during translation elongation. During this step, the ribosome changes from the pre-translocational (PRE) to the post-translocational (POST) state as the newly formed A-site-bound peptidyl-tRNA and P-site-bound deacylated tRNA move to the P and E sites, respectively. Catalyzes the coordinated movement of the two tRNA molecules, the mRNA and conformational changes in the ribosome. In Dictyostelium discoideum (Social amoeba), this protein is Elongation factor G, mitochondrial (gfm1).